Consider the following 177-residue polypeptide: ATP synthase subunit delta (177 aa).

This sequence belongs to the ATPase delta chain family. In terms of assembly, F-type ATPases have 2 components, F(1) - the catalytic core - and F(0) - the membrane proton channel. F(1) has five subunits: alpha(3), beta(3), gamma(1), delta(1), epsilon(1). F(0) has three main subunits: a(1), b(2) and c(10-14). The alpha and beta chains form an alternating ring which encloses part of the gamma chain. F(1) is attached to F(0) by a central stalk formed by the gamma and epsilon chains, while a peripheral stalk is formed by the delta and b chains.

It localises to the cell inner membrane. In terms of biological role, f(1)F(0) ATP synthase produces ATP from ADP in the presence of a proton or sodium gradient. F-type ATPases consist of two structural domains, F(1) containing the extramembraneous catalytic core and F(0) containing the membrane proton channel, linked together by a central stalk and a peripheral stalk. During catalysis, ATP synthesis in the catalytic domain of F(1) is coupled via a rotary mechanism of the central stalk subunits to proton translocation. Functionally, this protein is part of the stalk that links CF(0) to CF(1). It either transmits conformational changes from CF(0) to CF(1) or is implicated in proton conduction. This chain is ATP synthase subunit delta, found in Aliivibrio salmonicida (strain LFI1238) (Vibrio salmonicida (strain LFI1238)).